We begin with the raw amino-acid sequence, 438 residues long: Probable glycine dehydrogenase (decarboxylating) subunit 1 (438 aa).

This sequence belongs to the GcvP family. N-terminal subunit subfamily. The glycine cleavage system is composed of four proteins: P, T, L and H. In this organism, the P 'protein' is a heterodimer of two subunits.

The catalysed reaction is N(6)-[(R)-lipoyl]-L-lysyl-[glycine-cleavage complex H protein] + glycine + H(+) = N(6)-[(R)-S(8)-aminomethyldihydrolipoyl]-L-lysyl-[glycine-cleavage complex H protein] + CO2. The glycine cleavage system catalyzes the degradation of glycine. The P protein binds the alpha-amino group of glycine through its pyridoxal phosphate cofactor; CO(2) is released and the remaining methylamine moiety is then transferred to the lipoamide cofactor of the H protein. The chain is Probable glycine dehydrogenase (decarboxylating) subunit 1 from Syntrophomonas wolfei subsp. wolfei (strain DSM 2245B / Goettingen).